The primary structure comprises 130 residues: Cystatin (130 aa).

Positions 1-19 (MEWKIVVPLFAVAFTVANA) are cleaved as a signal peptide. Residues 67–71 (QVVSG) carry the Secondary area of contact motif. Cystine bridges form between C85-C94 and C108-C128.

The protein belongs to the cystatin family.

It is found in the secreted. In terms of biological role, cysteine proteinase inhibitor. The chain is Cystatin from Oncorhynchus mykiss (Rainbow trout).